A 335-amino-acid polypeptide reads, in one-letter code: Rho guanine nucleotide exchange factor 39 (335 aa).

In terms of domain architecture, DH spans 22–197; it reads KRACTARELL…SETAQRVHTI (176 aa). One can recognise a PH domain in the interval 227–331; it reads WFLRQGWLLV…WYHSLTLAIS (105 aa).

Its subcellular location is the cell membrane. Its function is as follows. Promotes cell proliferation. In Bos taurus (Bovine), this protein is Rho guanine nucleotide exchange factor 39 (ARHGEF39).